We begin with the raw amino-acid sequence, 258 residues long: Beta carbonic anhydrase 3 (258 aa).

Residues 1–28 form the signal peptide; it reads MSTESYEDAIKRLGELLSKKSDLGNVAA. Residues 24–54 adopt a coiled-coil conformation; sequence GNVAAAKIKKLTDELEELDSNKLDAVERIKS. The residue at position 35 (Thr-35) is a Phosphothreonine. Ser-95 is subject to Phosphoserine. Position 201 is an S-nitrosocysteine (Cys-201).

The protein belongs to the beta-class carbonic anhydrase family. Strongly expressed in aerial tissues including leaves, stems, flowers and siliques, and, to a lower extent, in roots.

It is found in the cytoplasm. The protein resides in the cytosol. The catalysed reaction is hydrogencarbonate + H(+) = CO2 + H2O. In terms of biological role, reversible hydration of carbon dioxide. This Arabidopsis thaliana (Mouse-ear cress) protein is Beta carbonic anhydrase 3 (BCA3).